Reading from the N-terminus, the 3013-residue chain is Genome polyprotein (3013 aa).

S2 is subject to N-acetylserine; by host. The segment at S2 to K23 is interaction with STAT1. Residues S2 to P58 form an interaction with EIF2AK2/PKR region. An interaction with DDX3X region spans residues S2–R59. The disordered stretch occupies residues S2–T75. At S2–N168 the chain is on the cytoplasmic side. Short sequence motifs (nuclear localization signal) lie at residues P5–R13 and P38–R43. Over residues P7–N16 the composition is skewed to basic residues. The span at G32 to R47 shows a compositional bias: low complexity. The residue at position 53 (S53) is a Phosphoserine; by host. 2 consecutive short sequence motifs (nuclear localization signal) follow at residues P58–P64 and P66–Q71. Positions P58–T72 are enriched in basic residues. Phosphoserine; by host is present on residues S99 and S116. The tract at residues P112–A152 is important for endoplasmic reticulum and mitochondrial localization. The interval V122–S173 is interaction with APOA2. The tract at residues Y164–G167 is important for lipid droplets localization. Residues L169–A189 traverse the membrane as a helical segment. The propeptide at L178–A191 is ER anchor for the core protein, removed in mature form by host signal peptidase. Topologically, residues S190–G358 are lumenal. N-linked (GlcNAc...) asparagine; by host glycosylation is found at N196, N209, N234, and N250. The interval M265 to R296 is important for fusion. A glycan (N-linked (GlcNAc...) asparagine; by host) is linked at N305. The chain crosses the membrane as a helical span at residues I359–A379. The Lumenal portion of the chain corresponds to G380–L723. The HVR1 stretch occupies residues T385–H412. N-linked (GlcNAc...) (high mannose) asparagine; by host glycans are attached at residues N417, N423, and N430. Cystine bridges form between C429–C553, C452–C459, C487–C495, and C504–C509. N448 is a glycosylation site (N-linked (GlcNAc...) asparagine; by host). Residues A475 to G479 are HVR2. N-linked (GlcNAc...) asparagine; by host glycosylation is present at N476. The segment at S481–P494 is CD81-binding 1. The N-linked (GlcNAc...) asparagine; by host glycan is linked to N533. The interval P545–G552 is CD81-binding 2. N-linked (GlcNAc...) asparagine; by host glycosylation occurs at N557. 4 disulfides stabilise this stretch: C565-C570, C579-C583, C595-C618, and C605-C642. 2 N-linked (GlcNAc...) (high mannose) asparagine; by host glycosylation sites follow: N621 and N643. A disulfide bridge links C650 with C675. Residues I658 to E669 are PKR/eIF2-alpha phosphorylation homology domain (PePHD). Residues L724–A744 traverse the membrane as a helical segment. At A745 to A755 the chain is on the lumenal side. A helical membrane pass occupies residues S756 to I776. The Cytoplasmic portion of the chain corresponds to K777–V780. A helical transmembrane segment spans residues V781–L801. Topologically, residues P802–E811 are lumenal. A helical transmembrane segment spans residues Q812–A832. Residues Y833–H879 are Cytoplasmic-facing. A helical membrane pass occupies residues P880–L900. Topologically, residues Q901–V926 are lumenal. The Peptidase C18 domain maps to Q901–L1024. The tract at residues V902–R1204 is protease NS2-3. A lipid anchor (S-palmitoyl cysteine; by host) is attached at C920. Residues A927 to I947 traverse the membrane as a helical segment. The segment at A927 to I947 is interaction with host SCPS1. The Cytoplasmic segment spans residues Y948 to T1655. Active-site for protease NS2 activity; shared with dimeric partner residues include H950, E970, and C991. Residues A1025–P1206 form the Peptidase S29 domain. Residues H1081 and D1105 each act as charge relay system; for serine protease NS3 activity in the active site. Residues C1121 and C1123 each coordinate Zn(2+). S1163 acts as the Charge relay system; for serine protease NS3 activity in catalysis. Zn(2+)-binding residues include C1169 and H1173. The region spanning P1215–S1367 is the Helicase ATP-binding domain. A1228–S1235 lines the ATP pocket. Residues S1235 and E1315 each contribute to the Mg(2+) site. The short motif at D1314–H1317 is the DECH box element. The region spanning Y1374 to R1536 is the Helicase C-terminal domain. The RNA-binding stretch occupies residues Q1484–V1496. Residues S1656–G1676 traverse the membrane as a helical segment. Residues S1677–G1688 are NS3-binding. The Cytoplasmic portion of the chain corresponds to S1677 to T1803. Residues T1804–S1824 traverse the membrane as a helical segment. The Lumenal segment spans residues T1825–A1826. A helical transmembrane segment spans residues F1827–I1847. D1848 is a topological domain (cytoplasmic). A helical membrane pass occupies residues I1849 to G1869. The Lumenal portion of the chain corresponds to E1870–N1879. A helical transmembrane segment spans residues L1880–L1900. Topologically, residues R1901–C1970 are cytoplasmic. C1970 is lipidated: S-palmitoyl cysteine; by host. The stretch at S1971–T2000 is an intramembrane region. The Cytoplasmic portion of the chain corresponds to L2001–R2992. Zn(2+)-binding residues include C2009, C2027, C2029, and C2050. Residues E2118 to A2206 form an FKBP8-binding region. A transcriptional activation region spans residues E2118–V2331. An interaction with non-structural protein 4A region spans residues P2133 to P2137. The segment at R2187–E2440 is interaction with host SKP2. 6 positions are modified to phosphoserine; by host: S2192, S2195, S2199, S2202, S2205, and S2208. Residues S2208 to K2247 are ISDR. Residues S2208–F2273 form an interaction with EIF2AK2/PKR region. The segment at K2247–Y2305 is NS4B-binding. Residues Q2298–P2376 are V3. A disordered region spans residues P2316 to T2411. An SH3-binding motif is present at residues P2321–P2324. The Nuclear localization signal motif lies at P2326–L2334. Over residues A2347–M2373 the composition is skewed to polar residues. Basic and acidic residues predominate over residues P2375–D2385. S2464 bears the Phosphoserine; by host mark. The 119-residue stretch at P2636 to D2754 folds into the RdRp catalytic domain. The Mg(2+) site is built by D2642, D2740, and D2741. Residues N2993–R3013 form a helical membrane-spanning segment.

The protein belongs to the hepacivirus polyprotein family. As to quaternary structure, homooligomer. Interacts with E1 (via C-terminus). Interacts with the non-structural protein 5A. Interacts (via N-terminus) with host STAT1 (via SH2 domain); this interaction results in decreased STAT1 phosphorylation and ubiquitin-mediated proteasome-dependent STAT1 degradation, leading to decreased IFN-stimulated gene transcription. Interacts with host STAT3; this interaction constitutively activates STAT3. Interacts with host LTBR receptor. Interacts with host TNFRSF1A receptor and possibly induces apoptosis. Interacts with host HNRPK. Interacts with host YWHAE. Interacts with host UBE3A/E6AP. Interacts with host DDX3X. Interacts with host APOA2. Interacts with host RXRA protein. Interacts with host SP110 isoform 3/Sp110b; this interaction sequesters the transcriptional corepressor SP110 away from the nucleus. Interacts with host CREB3 nuclear transcription protein; this interaction triggers cell transformation. Interacts with host ACY3. Interacts with host C1QR1. Interacts with host RBM24; this interaction, which enhances the interaction of the mature core protein with 5'-UTR, may inhibit viral translation and favor replication. Interacts with host EIF2AK2/PKR; this interaction induces the autophosphorylation of EIF2AK2. Part of the viral assembly initiation complex composed of NS2, E1, E2, NS3, NS4A, NS5A and the mature core protein. Forms a heterodimer with envelope glycoprotein E2. Interacts with mature core protein. Interacts with protease NS2. The heterodimer E1/E2 interacts with host CLDN1; this interaction plays a role in viral entry into host cell. Interacts with host SPSB2 (via C-terminus). Part of the viral assembly initiation complex composed of NS2, E1, E2, NS3, NS4A, NS5A and the mature core protein. Interacts with host NEURL3; this interaction prevents E1 binding to glycoprotein E2. In terms of assembly, forms a heterodimer with envelope glycoprotein E1. Interacts with host CD81 and SCARB1 receptors; these interactions play a role in viral entry into host cell. Interacts with host EIF2AK2/PKR; this interaction inhibits EIF2AK2 and probably allows the virus to evade the innate immune response. Interacts with host CD209/DC-SIGN and CLEC4M/DC-SIGNR. Interact with host SPCS1; this interaction is essential for viral particle assembly. Interacts with protease NS2. The heterodimer E1/E2 interacts with host CLDN1; this interaction plays a role in viral entry into host cell. Part of the viral assembly initiation complex composed of NS2, E1, E2, NS3, NS4A, NS5A and the mature core protein. Interacts with host SLC3A2/4F2hc; the interaction may facilitate viral entry into host cell. Interacts with human PLSCR1. As to quaternary structure, homohexamer. Homoheptamer. Interacts with protease NS2. Homodimer. Interacts with host SPCS1; this interaction is essential for viral particle assembly. Interacts with envelope glycoprotein E1. Interacts with envelope glycoprotein E2. Interacts with viroporin p7. Interacts with serine protease/helicase NS3. Part of the replication complex composed of NS2, NS3, NS4A, NS4B, NS5A and the RNA-directed RNA polymerase embedded in an ER-derived membranous web. Part of the viral assembly initiation complex composed of NS2, E1, E2, NS3, NS4A, NS5A and the mature core protein. In terms of assembly, interacts with protease NS2. Interacts with non-structural protein 4A; this interaction stabilizes the folding of NS3 serine protease. NS3-NS4A interaction is essential for NS3 activation and allows membrane anchorage of the latter. NS3/NS4A complex also prevents phosphorylation of host IRF3, thus preventing the establishment of dsRNA induced antiviral state. Interacts with host MAVS; this interaction leads to the cleavage and inhibition of host MAVS. Interacts with host TICAM1; this interaction leads to the cleavage and inhibition of host TICAM1. Interacts with host TANK-binding kinase/TBK1; this interaction results in the inhibition of the association between TBK1 and IRF3, which leads to the inhibition of IRF3 activation. Interacts with host RBM24. Part of the replication complex composed of NS2, NS3, NS4A, NS4B, NS5A and the RNA-directed RNA polymerase embedded in an ER-derived membranous web. Part of the viral assembly initiation complex composed of NS2, E1, E2, NS3, NS4A, NS5A and the mature core protein. As to quaternary structure, interacts with NS3 serine protease; this interaction stabilizes the folding of NS3 serine protease. NS3-NS4A interaction is essential for NS3 activation and allows membrane anchorage of the latter. Interacts with non-structural protein 5A (via N-terminus). Part of the replication complex composed of NS2, NS3, NS4A, NS4B, NS5A and the RNA-directed RNA polymerase embedded in an ER-derived membranous web. Part of the viral assembly initiation complex composed of NS2, E1, E2, NS3, NS4A, NS5A and the mature core protein. Homomultimer. Interacts with non-structural protein NS5A. Interacts with host PLA2G4C; this interaction likely initiates the recruitment of replication complexes to lipid droplets. Interacts with host STING; this interaction disrupts the interaction between STING and TBK1 thereby suppressing the interferon signaling. Part of the replication complex composed of NS2, NS3, NS4A, NS4B, NS5A and the RNA-directed RNA polymerase embedded in an ER-derived membranous web. In terms of assembly, monomer. Homodimer; dimerization is required for RNA-binding. Interacts with the mature core protein. Interacts (via N-terminus) with non-structural protein 4A. Interacts with non-structural protein 4B. Interacts (via region D2) with RNA-directed RNA polymerase. Part of the viral assembly initiation complex composed of NS2, E1, E2, NS3, NS4A, NS5A and the mature core protein. Part of the replication complex composed of NS2, NS3, NS4A, NS4B, NS5A and the RNA-directed RNA polymerase embedded in an ER-derived membranous web. Interacts with host GRB2. Interacts with host BIN1. Interacts with host PIK3R1. Interacts with host SRCAP. Interacts with host FKBP8. Interacts (via C-terminus) with host VAPB (via MSP domain). Interacts with host EIF2AK2/PKR; this interaction leads to disruption of EIF2AK2 dimerization by NS5A and probably allows the virus to evade the innate immune response. Interacts (via N-terminus) with host PACSIN2 (via N-terminus); this interaction attenuates protein kinase C alpha-mediated phosphorylation of PACSIN2 by disrupting the interaction between PACSIN2 and PRKCA. Interacts (via N-terminus) with host SRC kinase (via SH2 domain). Interacts with most Src-family kinases. Interacts with host IFI27 and SKP2; promotes the ubiquitin-mediated proteasomal degradation of NS5A. Interacts with host GPS2. Interacts with host TNFRSF21; this interaction allows the modulation by the virus of JNK, p38 MAPK, STAT3, and Akt signaling pathways in a DR6-dependent manner. Interacts (via N-terminus) with host CIDEB (via N-terminus); this interaction seems to regulate the association of HCV particles with APOE. Interacts with host CHKA/Choline Kinase-alpha; CHKA bridges host PI4KA and NS5A and potentiates NS5A-stimulated PI4KA activity, which then facilitates the targeting of the ternary complex to the ER for viral replication. Interacts with host SPSB2 (via C-terminus); this interaction targets NS5A for ubiquitination and degradation. Interacts with host RAB18; this interaction may promote the association of NS5A and other replicase components with lipid droplets. Interacts (via region D2) with host PPIA/CYPA; the interaction stimulates RNA-binding ability of NS5A and is dependent on the peptidyl-prolyl cis-trans isomerase activity of PPIA/CYPA. Interacts with host TRIM14; this interaction induces the degradation of NS5A. As to quaternary structure, homooligomer. Interacts with non-structural protein 5A. Interacts with host VAPB. Interacts with host PRK2/PKN2. Interacts with host HNRNPA1 and SEPT6; these interactions facilitate viral replication. Part of the replication complex composed of NS2, NS3, NS4A, NS4B, NS5A and the RNA-directed RNA polymerase. Zn(2+) serves as cofactor. Requires Mg(2+) as cofactor. Specific enzymatic cleavages in vivo yield mature proteins. The structural proteins, core, E1, E2 and p7 are produced by proteolytic processing by host signal peptidases. The core protein precursor is synthesized as a 23 kDa, which is retained in the ER membrane through the hydrophobic signal peptide. Cleavage by the signal peptidase releases the 21 kDa mature core protein. The cleavage of the core protein precursor occurs between aminoacids 176 and 188 but the exact cleavage site is not known. Some degraded forms of the core protein appear as well during the course of infection. The other proteins (p7, NS2, NS3, NS4A, NS4B, NS5A and NS5B) are cleaved by the viral proteases. Autoprocessing between NS2 and NS3 is mediated by the NS2 cysteine protease catalytic domain and regulated by the NS3 N-terminal domain. In terms of processing, phosphorylated by host PKC and PKA. Post-translationally, ubiquitinated; mediated by UBE3A and leading to core protein subsequent proteasomal degradation. Highly N-glycosylated. In terms of processing, palmitoylation is required for NS2/3 autoprocessing and E2 recruitment to membranes. Post-translationally, palmitoylated. This modification may play a role in its polymerization or in protein-protein interactions. Phosphorylated on serines in a basal form termed p56. p58 is a hyperphosphorylated form of p56. p56 and p58 coexist in the cell in roughly equivalent amounts. Hyperphosphorylation is dependent on the presence of NS4A. Host CSNK1A1/CKI-alpha or RPS6KB1 kinases may be responsible for NS5A phosphorylation. In terms of processing, tyrosine phosphorylation is essential for the interaction with host SRC. Post-translationally, the N-terminus is phosphorylated by host PRK2/PKN2.

The protein resides in the host endoplasmic reticulum membrane. Its subcellular location is the host mitochondrion membrane. The protein localises to the virion. It is found in the host cytoplasm. It localises to the host nucleus. The protein resides in the host lipid droplet. Its subcellular location is the virion membrane. The protein localises to the host mitochondrion. It is found in the host cell membrane. It localises to the host perinuclear region. The catalysed reaction is Hydrolysis of four peptide bonds in the viral precursor polyprotein, commonly with Asp or Glu in the P6 position, Cys or Thr in P1 and Ser or Ala in P1'.. It catalyses the reaction a ribonucleoside 5'-triphosphate + H2O = a ribonucleoside 5'-diphosphate + phosphate + H(+). It carries out the reaction ATP + H2O = ADP + phosphate + H(+). The enzyme catalyses RNA(n) + a ribonucleoside 5'-triphosphate = RNA(n+1) + diphosphate. Its activity is regulated as follows. Inhibited by the antiviral drug hexamethylene amiloride. Inhibition by amantadine appears to be genotype-dependent. Also inhibited by long-alkyl-chain iminosugar derivatives. Activity is up-regulated by PRK2/PKN2-mediated phosphorylation. Functionally, packages viral RNA to form a viral nucleocapsid, and promotes virion budding. Participates in the viral particle production as a result of its interaction with the non-structural protein 5A. Binds RNA and may function as a RNA chaperone to induce the RNA structural rearrangements taking place during virus replication. Modulates viral translation initiation by interacting with viral IRES and 40S ribosomal subunit. Affects various cell signaling pathways, host immunity and lipid metabolism. Prevents the establishment of cellular antiviral state by blocking the interferon-alpha/beta (IFN-alpha/beta) and IFN-gamma signaling pathways and by blocking the formation of phosphorylated STAT1 and promoting ubiquitin-mediated proteasome-dependent degradation of STAT1. Activates STAT3 leading to cellular transformation. Regulates the activity of cellular genes, including c-myc and c-fos. May repress the promoter of p53, and sequester CREB3 and SP110 isoform 3/Sp110b in the cytoplasm. Represses cell cycle negative regulating factor CDKN1A, thereby interrupting an important check point of normal cell cycle regulation. Targets transcription factors involved in the regulation of inflammatory responses and in the immune response: suppresses TNF-induced NF-kappa-B activation, and activates AP-1. Binds to dendritic cells (DCs) via C1QR1, resulting in down-regulation of T-lymphocytes proliferation. Alters lipid metabolism by interacting with hepatocellular proteins involved in lipid accumulation and storage. Induces up-regulation of FAS promoter activity, and thereby contributes to the increased triglyceride accumulation in hepatocytes (steatosis). Its function is as follows. Forms a heterodimer with envelope glycoprotein E2, which mediates virus attachment to the host cell, virion internalization through clathrin-dependent endocytosis and fusion with host membrane. Fusion with the host cell is most likely mediated by both E1 and E2, through conformational rearrangements of the heterodimer required for fusion rather than a classical class II fusion mechanism. E1/E2 heterodimer binds host apolipoproteins such as APOB and ApoE thereby forming a lipo-viro-particle (LVP). APOE associated to the LVP allows the initial virus attachment to cell surface receptors such as the heparan sulfate proteoglycans (HSPGs), syndecan-1 (SDC1), syndecan-1 (SDC2), the low-density lipoprotein receptor (LDLR) and scavenger receptor class B type I (SCARB1). The cholesterol transfer activity of SCARB1 allows E2 exposure and binding of E2 to SCARB1 and the tetraspanin CD81. E1/E2 heterodimer binding on CD81 activates the epithelial growth factor receptor (EGFR) signaling pathway. Diffusion of the complex E1-E2-EGFR-SCARB1-CD81 to the cell lateral membrane allows further interaction with Claudin 1 (CLDN1) and occludin (OCLN) to finally trigger HCV entry. In terms of biological role, forms a heterodimer with envelope glycoprotein E1, which mediates virus attachment to the host cell, virion internalization through clathrin-dependent endocytosis and fusion with host membrane. Fusion with the host cell is most likely mediated by both E1 and E2, through conformational rearrangements of the heterodimer required for fusion rather than a classical class II fusion mechanism. The interaction between envelope glycoprotein E2 and host apolipoprotein E/APOE allows the proper assembly, maturation and infectivity of the viral particles. This interaction is probably promoted via the up-regulation of cellular autophagy by the virus. E1/E2 heterodimer binds host apolipoproteins such as APOB and APOE thereby forming a lipo-viro-particle (LVP). APOE associated to the LVP allows the initial virus attachment to cell surface receptors such as the heparan sulfate proteoglycans (HSPGs), syndecan-1 (SDC1), syndecan-1 (SDC2), the low-density lipoprotein receptor (LDLR) and scavenger receptor class B type I (SCARB1). The cholesterol transfer activity of SCARB1 allows E2 exposure and binding of E2 to SCARB1 and the tetraspanin CD81. E1/E2 heterodimer binding on CD81 activates the epithelial growth factor receptor (EGFR) signaling pathway. Diffusion of the complex E1-E2-EGFR-SCARB1-CD81 to the cell lateral membrane allows further interaction with Claudin 1 (CLDN1) and occludin (OCLN) to finally trigger HCV entry. Inhibits host EIF2AK2/PKR activation, preventing the establishment of an antiviral state. Viral ligand for CD209/DC-SIGN and CLEC4M/DC-SIGNR, which are respectively found on dendritic cells (DCs), and on liver sinusoidal endothelial cells and macrophage-like cells of lymph node sinuses. These interactions allow the capture of circulating HCV particles by these cells and subsequent facilitated transmission to permissive cells such as hepatocytes and lymphocyte subpopulations. The interaction between E2 and host amino acid transporter complex formed by SLC3A2 and SLC7A5/LAT1 may facilitate viral entry into host cell. Ion channel protein that acts as a viroporin and plays an essential role in the assembly, envelopment and secretion of viral particles. Regulates the host cell secretory pathway, which induces the intracellular retention of viral glycoproteins and favors assembly of viral particles. Creates a pore in acidic organelles and releases Ca(2+) and H(+) in the cytoplasm of infected cells, leading to a productive viral infection. High levels of cytoplasmic Ca(2+) may trigger membrane trafficking and transport of viral ER-associated proteins to viroplasms, sites of viral genome replication. This ionic imbalance induces the assembly of the inflammasome complex, which triggers the maturation of pro-IL-1beta into IL-1beta through the action of caspase-1. Targets also host mitochondria and induces mitochondrial depolarization. In addition of its role as a viroporin, acts as a lipid raft adhesion factor. Functionally, cysteine protease required for the proteolytic auto-cleavage between the non-structural proteins NS2 and NS3. The N-terminus of NS3 is required for the function of NS2 protease (active region NS2-3). Promotes the initiation of viral particle assembly by mediating the interaction between structural and non-structural proteins. Its function is as follows. Displays three enzymatic activities: serine protease with a chymotrypsin-like fold, NTPase and RNA helicase. NS3 serine protease, in association with NS4A, is responsible for the cleavages of NS3-NS4A, NS4A-NS4B, NS4B-NS5A and NS5A-NS5B. The NS3/NS4A complex prevents phosphorylation of host IRF3, thus preventing the establishment of dsRNA induced antiviral state. The NS3/NS4A complex induces host amino acid transporter component SLC3A2, thus contributing to HCV propagation. NS3 RNA helicase binds to RNA and unwinds both dsDNA and dsRNA in the 3' to 5' direction, and likely resolves RNA complicated stable secondary structures in the template strand. Binds a single ATP and catalyzes the unzipping of a single base pair of dsRNA. Inhibits host antiviral proteins TBK1 and IRF3 thereby preventing the establishment of an antiviral state. Cleaves host MAVS/CARDIF thereby preventing the establishment of an antiviral state. Cleaves host TICAM1/TRIF, thereby disrupting TLR3 signaling and preventing the establishment of an antiviral state. In terms of biological role, peptide cofactor which forms a non-covalent complex with the N-terminal of NS3 serine protease. The NS3/NS4A complex prevents phosphorylation of host IRF3, thus preventing the establishment of dsRNA induced antiviral state. The NS3/NS4A complex induces host amino acid transporter component SLC3A2, thus contributing to HCV propagation. Induces a specific membrane alteration that serves as a scaffold for the virus replication complex. This membrane alteration gives rise to the so-called ER-derived membranous web that contains the replication complex. NS4B self-interaction contributes to its function in membranous web formation. Promotes host TRIF protein degradation in a CASP8-dependent manner thereby inhibiting host TLR3-mediated interferon signaling. Disrupts the interaction between STING and TBK1 contributing to the inhibition of interferon signaling. Functionally, phosphorylated protein that is indispensable for viral replication and assembly. Both hypo- and hyperphosphorylated states are required for the viral life cycle. The hyperphosphorylated form of NS5A is an inhibitor of viral replication. Involved in RNA-binding and especially in binding to the viral genome. Zinc is essential for RNA-binding. Participates in the viral particle production as a result of its interaction with the mature viral core protein. Its interaction with host VAPB may target the viral replication complex to vesicles. Down-regulates viral IRES translation initiation. Mediates interferon resistance, presumably by interacting with and inhibiting host EIF2AK2/PKR. Prevents BIN1-induced apoptosis. Acts as a transcriptional activator of some host genes important for viral replication when localized in the nucleus. Via the interaction with host PACSIN2, modulates lipid droplet formation in order to promote virion assembly. Modulates TNFRSF21/DR6 signaling pathway for viral propagation. Its function is as follows. RNA-dependent RNA polymerase that performs primer-template recognition and RNA synthesis during viral replication. Initiates RNA transcription/replication at a flavin adenine dinucleotide (FAD), resulting in a 5'- FAD cap on viral RNAs. In this way, recognition of viral 5' RNA by host pattern recognition receptors can be bypassed, thereby evading activation of antiviral pathways. In Hepatitis C virus genotype 6d (isolate VN235) (HCV), this protein is Genome polyprotein.